We begin with the raw amino-acid sequence, 166 residues long: Thioredoxin, mitochondrial (166 aa).

A mitochondrion-targeting transit peptide spans Met1–Ser59. A Thioredoxin domain is found at Thr61 to Gly166. Active-site nucleophile residues include Cys90 and Cys93. Cys90 and Cys93 are disulfide-bonded. Residue Lys152 is modified to N6-acetyllysine; alternate. Residue Lys152 is modified to N6-succinyllysine; alternate.

The protein belongs to the thioredoxin family. As to quaternary structure, monomer. As to expression, expressed in several tissues with the highest expression levels in heart, muscle, kidney and adrenal gland.

It is found in the mitochondrion. Important for the control of mitochondrial reactive oxygen species homeostasis, apoptosis regulation and cell viability. Is involved in various redox reactions including the reduction of protein disulfide bonds, through the reversible oxidation of its active center dithiol to a disulfide. The protein is Thioredoxin, mitochondrial (Txn2) of Rattus norvegicus (Rat).